Here is a 120-residue protein sequence, read N- to C-terminus: UPF0715 membrane protein YwlA (120 aa).

4 helical membrane-spanning segments follow: residues 3-23 (YNYT…VIYI), 26-46 (FIIA…LIFA), 63-83 (LYLL…FGML), and 95-115 (AFYL…SVLL).

This sequence belongs to the UPF0715 family.

The protein resides in the cell membrane. This chain is UPF0715 membrane protein YwlA (ywlA), found in Bacillus subtilis (strain 168).